We begin with the raw amino-acid sequence, 249 residues long: Probable transcriptional regulatory protein IL1088 (249 aa).

Belongs to the TACO1 family.

Its subcellular location is the cytoplasm. The protein is Probable transcriptional regulatory protein IL1088 of Idiomarina loihiensis (strain ATCC BAA-735 / DSM 15497 / L2-TR).